The sequence spans 76 residues: Cytochrome c oxidase subunit 6C-2 (76 aa).

At 4–14 (GALLPKPQMRG) the chain is on the mitochondrial matrix side. The chain crosses the membrane as a helical span at residues 15-55 (LLAKRLRVHIVGAFVVALGVAAAYKFGVAEPRKKAYADFYR). The Mitochondrial intermembrane portion of the chain corresponds to 56–76 (NYDSMKDFEEMRQAGVFQSAK). Phosphoserine is present on Ser74.

Belongs to the cytochrome c oxidase subunit 6c family. As to quaternary structure, component of the cytochrome c oxidase (complex IV, CIV), a multisubunit enzyme composed of 14 subunits. The complex is composed of a catalytic core of 3 subunits MT-CO1, MT-CO2 and MT-CO3, encoded in the mitochondrial DNA, and 11 supernumerary subunits COX4I, COX5A, COX5B, COX6A, COX6B, COX6C, COX7A, COX7B, COX7C, COX8 and NDUFA4, which are encoded in the nuclear genome. The complex exists as a monomer or a dimer and forms supercomplexes (SCs) in the inner mitochondrial membrane with NADH-ubiquinone oxidoreductase (complex I, CI) and ubiquinol-cytochrome c oxidoreductase (cytochrome b-c1 complex, complex III, CIII), resulting in different assemblies (supercomplex SCI(1)III(2)IV(1) and megacomplex MCI(2)III(2)IV(2)).

It is found in the mitochondrion inner membrane. The protein operates within energy metabolism; oxidative phosphorylation. Its function is as follows. Component of the cytochrome c oxidase, the last enzyme in the mitochondrial electron transport chain which drives oxidative phosphorylation. The respiratory chain contains 3 multisubunit complexes succinate dehydrogenase (complex II, CII), ubiquinol-cytochrome c oxidoreductase (cytochrome b-c1 complex, complex III, CIII) and cytochrome c oxidase (complex IV, CIV), that cooperate to transfer electrons derived from NADH and succinate to molecular oxygen, creating an electrochemical gradient over the inner membrane that drives transmembrane transport and the ATP synthase. Cytochrome c oxidase is the component of the respiratory chain that catalyzes the reduction of oxygen to water. Electrons originating from reduced cytochrome c in the intermembrane space (IMS) are transferred via the dinuclear copper A center (CU(A)) of subunit 2 and heme A of subunit 1 to the active site in subunit 1, a binuclear center (BNC) formed by heme A3 and copper B (CU(B)). The BNC reduces molecular oxygen to 2 water molecules using 4 electrons from cytochrome c in the IMS and 4 protons from the mitochondrial matrix. This is Cytochrome c oxidase subunit 6C-2 (Cox6c2) from Rattus norvegicus (Rat).